Reading from the N-terminus, the 79-residue chain is Antimicrobial peptide UyCT1 (79 aa).

Residues 1 to 23 (MKTQLAFLAITVILMQLFAQTEA) form the signal peptide. The residue at position 37 (Ile37) is an Isoleucine amide. Residues 41 to 79 (GLRNVDQIADLFDSGLSDADDLFDSGLSDADAKFMKMFM) constitute a propeptide that is removed on maturation.

Belongs to the non-disulfide-bridged peptide (NDBP) superfamily. Short antimicrobial peptide (group 4) family. In terms of tissue distribution, expressed by the venom gland.

Its subcellular location is the secreted. The protein resides in the target cell membrane. Functionally, inhibits the growth of Gram-positive (S.aureus, MIC=15 uM) and Gram-negative bacteria (E.coli, MIC=10 uM and P.aeruginosa, MIC=10 uM). It also shows 26% of hemolysis when 15 uM are tested (81% at 50 uM). Its function is as follows. Inhibits the growth of Gram-negative bacteria (E.coli, MIC=25 uM and P.aeruginosa, MIC=40 uM). It also shows 7% of hemolysis when 50 uM are tested. Does not show activity against the Gram-positive bacteria S.aureus. The sequence is that of Antimicrobial peptide UyCT1 from Urodacus yaschenkoi (Inland robust scorpion).